We begin with the raw amino-acid sequence, 220 residues long: Deoxyribose-phosphate aldolase (220 aa).

The active-site Proton donor/acceptor is the aspartate 89. Lysine 151 serves as the catalytic Schiff-base intermediate with acetaldehyde. Lysine 180 acts as the Proton donor/acceptor in catalysis.

The protein belongs to the DeoC/FbaB aldolase family. DeoC type 1 subfamily.

It is found in the cytoplasm. The enzyme catalyses 2-deoxy-D-ribose 5-phosphate = D-glyceraldehyde 3-phosphate + acetaldehyde. It functions in the pathway carbohydrate degradation; 2-deoxy-D-ribose 1-phosphate degradation; D-glyceraldehyde 3-phosphate and acetaldehyde from 2-deoxy-alpha-D-ribose 1-phosphate: step 2/2. Functionally, catalyzes a reversible aldol reaction between acetaldehyde and D-glyceraldehyde 3-phosphate to generate 2-deoxy-D-ribose 5-phosphate. This is Deoxyribose-phosphate aldolase from Thermus thermophilus (strain ATCC BAA-163 / DSM 7039 / HB27).